A 116-amino-acid chain; its full sequence is Iron-sulfur cluster insertion protein ErpA (116 aa).

Cys44, Cys108, and Cys110 together coordinate iron-sulfur cluster.

The protein belongs to the HesB/IscA family. In terms of assembly, homodimer. The cofactor is iron-sulfur cluster.

Functionally, required for insertion of 4Fe-4S clusters for at least IspG. The polypeptide is Iron-sulfur cluster insertion protein ErpA (Francisella philomiragia subsp. philomiragia (strain ATCC 25017 / CCUG 19701 / FSC 153 / O#319-036)).